The chain runs to 102 residues: Large ribosomal subunit protein bL21 (102 aa).

It belongs to the bacterial ribosomal protein bL21 family. In terms of assembly, part of the 50S ribosomal subunit. Contacts protein L20.

Its function is as follows. This protein binds to 23S rRNA in the presence of protein L20. The protein is Large ribosomal subunit protein bL21 of Nocardioides sp. (strain ATCC BAA-499 / JS614).